The primary structure comprises 435 residues: Plant UBX domain-containing protein 6 (435 aa).

Disordered stretches follow at residues 1–150 (MDVN…PQKV), 208–265 (ENYT…EDQP), and 311–352 (PTTT…SMSS). The segment covering 49–62 (TSSFSTFDGSSGYS) has biased composition (low complexity). Over residues 112-129 (AVEHYGGEENRAIERPEQ) the composition is skewed to basic and acidic residues. The segment covering 130–141 (SSRSMSEETVSS) has biased composition (low complexity). Positions 150–211 (VFTHTVTSWS…IISREEENYT (62 aa)) constitute an SEP 1 domain. The span at 211–222 (TESQAGSDSAST) shows a compositional bias: polar residues. A compositionally biased stretch (basic and acidic residues) spans 231 to 242 (RAKESAIERSEQ). The span at 252-265 (DSAELQEQQQEDQP) shows a compositional bias: acidic residues. Residues 268 to 343 (VVTYTVTIWR…ESTSTEPPLT (76 aa)) enclose the SEP 2 domain. 2 stretches are compositionally biased toward low complexity: residues 312–323 (TTTRSTSCSSQT) and 333–349 (SEST…QPPS). Positions 357-434 (PAAPTTSIQL…GIANSVLVQK (78 aa)) constitute a UBX domain.

The chain is Plant UBX domain-containing protein 6 from Arabidopsis thaliana (Mouse-ear cress).